The chain runs to 111 residues: uncharacterized protein (111 aa).

Residues 60–80 traverse the membrane as a helical segment; it reads TFGRFLAHISCLICILSKRIF.

The protein resides in the mitochondrion membrane. This is an uncharacterized protein from Arabidopsis thaliana (Mouse-ear cress).